The following is a 692-amino-acid chain: Protein adenylyltransferase SelO-1, mitochondrial (692 aa).

Residues 1 to 24 constitute a mitochondrion transit peptide; sequence MASVGSRLTRFYISRPGVIARRFL. ATP contacts are provided by Gly-142, Gly-144, Lys-176, Asp-188, Gly-189, Arg-246, and Arg-253. Catalysis depends on Asp-337, which acts as the Proton acceptor. Mg(2+) is bound by residues Asn-338 and Asp-347. Asp-347 is an ATP binding site. Residues 637–676 form a disordered region; sequence LEQPGWMGRGGAAIPGERDETEEEGSNSSGAGARGLVPYD. A non-standard amino acid (selenocysteine) is located at residue Sec-690.

This sequence belongs to the SELO family. Mg(2+) is required as a cofactor.

It is found in the mitochondrion. The enzyme catalyses L-tyrosyl-[protein] + ATP = O-(5'-adenylyl)-L-tyrosyl-[protein] + diphosphate. It carries out the reaction L-threonyl-[protein] + ATP = 3-O-(5'-adenylyl)-L-threonyl-[protein] + diphosphate. The catalysed reaction is L-seryl-[protein] + ATP = 3-O-(5'-adenylyl)-L-seryl-[protein] + diphosphate. Catalyzes the transfer of adenosine 5'-monophosphate (AMP) to Ser, Thr and Tyr residues of target proteins (AMPylation). May be a redox-active mitochondrial selenoprotein which interacts with a redox target protein. This chain is Protein adenylyltransferase SelO-1, mitochondrial, found in Danio rerio (Zebrafish).